Consider the following 103-residue polypeptide: Nucleoid-associated protein A2cp1_3777 (103 aa).

Belongs to the YbaB/EbfC family. In terms of assembly, homodimer.

The protein localises to the cytoplasm. It is found in the nucleoid. Binds to DNA and alters its conformation. May be involved in regulation of gene expression, nucleoid organization and DNA protection. This is Nucleoid-associated protein A2cp1_3777 from Anaeromyxobacter dehalogenans (strain 2CP-1 / ATCC BAA-258).